The following is a 234-amino-acid chain: Peptidase E (234 aa).

Active-site charge relay system residues include serine 120, aspartate 135, and histidine 157.

The protein belongs to the peptidase S51 family.

It localises to the cytoplasm. The enzyme catalyses Dipeptidase E catalyzes the hydrolysis of dipeptides Asp-|-Xaa. It does not act on peptides with N-terminal Glu, Asn or Gln, nor does it cleave isoaspartyl peptides.. Its function is as follows. Hydrolyzes dipeptides containing N-terminal aspartate residues. May play a role in allowing the cell to use peptide aspartate to spare carbon otherwise required for the synthesis of the aspartate family of amino acids. This chain is Peptidase E, found in Salmonella gallinarum (strain 287/91 / NCTC 13346).